A 146-amino-acid chain; its full sequence is MPRSSFSGSLSSPKLDVVIDMGNPFLNLTVDGFLKIGAVAATRSVAEDTFHIIRKGSISSNDFEKSLKKMCKEGAYWGAIAGVYVGMEYGVERIRGTRDWKNAMFGGAVTGALVSAASNNKKDKIAVDAITGAAIATAAEFINYLT.

Residues 1–73 form a contains 4 beta strands region; the sequence is MPRSSFSGSL…EKSLKKMCKE (73 aa). 3 helical membrane-spanning segments follow: residues 75–91, 103–119, and 128–146; these read AYWG…EYGV, AMFG…AASN, and DAIT…NYLT.

The protein belongs to the Tim17/Tim22/Tim23 family. Plastid outer envelope porin OEP16 (TC 1.B.30) subfamily. Homodimer and oligomers in membrane.

The protein resides in the plastid. It is found in the chloroplast outer membrane. Its subcellular location is the etioplast membrane. In terms of biological role, voltage-dependent high-conductance channel with a slight cation-selectivity; selective for amino acids but excludes triosephosphates or uncharged sugars. Non-essential amino acid-selective channel protein and translocation pore for NADPH:protochlorophyllide oxidoreductase A (PORA) and possibly PORB. The sequence is that of Outer envelope pore protein 16, chloroplastic (OEP16) from Pisum sativum (Garden pea).